Here is an 880-residue protein sequence, read N- to C-terminus: Tyrosine-protein kinase receptor TYRO3 (880 aa).

Positions 1–30 are cleaved as a signal peptide; that stretch reads MALRRSMGWPGLRPLLLAGLASLLLPGSAA. Ig-like C2-type domains follow at residues 31–118 and 129–209; these read AGLK…TKIS and PFFT…PAIV. The Extracellular portion of the chain corresponds to 31–419; that stretch reads AGLKLMGAPV…QGPPHSRTSW (389 aa). 8 N-linked (GlcNAc...) asparagine glycosylation sites follow: N53, N75, N181, N220, N230, N283, N356, and N370. 2 disulfides stabilise this stretch: C54/C107 and C150/C193. 2 consecutive Fibronectin type-III domains span residues 217–310 and 315–406; these read APFN…TKGL and APQN…SHDH. A helical membrane pass occupies residues 420–440; that stretch reads VPVVLGVLTALITAAALALIL. The Cytoplasmic segment spans residues 441-880; sequence LRKRRKETRF…QQGLLPHSSC (440 aa). S456 bears the Phosphoserine mark. The Protein kinase domain occupies 508-785; it reads FTLGRMLGKG…LENILGHLSV (278 aa). ATP contacts are provided by residues 514–522 and K540; that span reads LGKGEFGSV. Catalysis depends on D645, which acts as the Proton acceptor. Y671, Y675, Y676, and Y794 each carry phosphotyrosine; by autocatalysis. The tract at residues 800-864 is disordered; that stretch reads AEQPTESGSP…QQPESPLNEN (65 aa). 2 positions are modified to phosphoserine: S808 and S859. The span at 849–864 shows a compositional bias: polar residues; that stretch reads SPGQLEQQPESPLNEN.

This sequence belongs to the protein kinase superfamily. Tyr protein kinase family. AXL/UFO subfamily. In terms of assembly, monomer and homodimer. Interacts (via N-terminus) with extracellular ligands TULP1 and GAS6. Interacts with PIK3R1; this interaction increases PI3-kinase activity. Autophosphorylated. Abundant in the brain and lower levels in other tissues.

Its subcellular location is the cell membrane. It carries out the reaction L-tyrosyl-[protein] + ATP = O-phospho-L-tyrosyl-[protein] + ADP + H(+). Functionally, receptor tyrosine kinase that transduces signals from the extracellular matrix into the cytoplasm by binding to several ligands including TULP1 or GAS6. Regulates many physiological processes including cell survival, migration and differentiation. Ligand binding at the cell surface induces dimerization and autophosphorylation of TYRO3 on its intracellular domain that provides docking sites for downstream signaling molecules. Following activation by ligand, interacts with PIK3R1 and thereby enhances PI3-kinase activity. Activates the AKT survival pathway, including nuclear translocation of NF-kappa-B and up-regulation of transcription of NF-kappa-B-regulated genes. TYRO3 signaling plays a role in various processes such as neuron protection from excitotoxic injury, platelet aggregation and cytoskeleton reorganization. Also plays an important role in inhibition of Toll-like receptors (TLRs)-mediated innate immune response by activating STAT1, which selectively induces production of suppressors of cytokine signaling SOCS1 and SOCS3. This chain is Tyrosine-protein kinase receptor TYRO3 (Tyro3), found in Mus musculus (Mouse).